Consider the following 463-residue polypeptide: L-seryl-tRNA(Sec) selenium transferase (463 aa).

Lysine 294 carries the post-translational modification N6-(pyridoxal phosphate)lysine.

Belongs to the SelA family. The cofactor is pyridoxal 5'-phosphate.

It localises to the cytoplasm. It carries out the reaction L-seryl-tRNA(Sec) + selenophosphate + H(+) = L-selenocysteinyl-tRNA(Sec) + phosphate. Its pathway is aminoacyl-tRNA biosynthesis; selenocysteinyl-tRNA(Sec) biosynthesis; selenocysteinyl-tRNA(Sec) from L-seryl-tRNA(Sec) (bacterial route): step 1/1. Converts seryl-tRNA(Sec) to selenocysteinyl-tRNA(Sec) required for selenoprotein biosynthesis. This Hyphomonas neptunium (strain ATCC 15444) protein is L-seryl-tRNA(Sec) selenium transferase.